The sequence spans 88 residues: Putative regulatory protein Npun_R3866 (88 aa).

This sequence belongs to the RemA family.

The polypeptide is Putative regulatory protein Npun_R3866 (Nostoc punctiforme (strain ATCC 29133 / PCC 73102)).